Reading from the N-terminus, the 297-residue chain is N-acetylmuramoyl-L-alanine amidase XlyA (297 aa).

The first 44 residues, Met-1–Ala-44, serve as a signal peptide directing secretion. Positions Arg-45–Arg-140 constitute an N-acetylmuramoyl-L-alanine amidase domain. In terms of domain architecture, LysM spans Gln-159 to Val-203.

Belongs to the N-acetylmuramoyl-L-alanine amidase 2 family.

It is found in the secreted. The enzyme catalyses Hydrolyzes the link between N-acetylmuramoyl residues and L-amino acid residues in certain cell-wall glycopeptides.. Functionally, autolysins are involved in some important biological processes such as cell separation, cell-wall turnover, competence for genetic transformation, formation of the flagella and sporulation. In Bacillus subtilis (strain 168), this protein is N-acetylmuramoyl-L-alanine amidase XlyA (xlyA).